We begin with the raw amino-acid sequence, 202 residues long: Protein N-terminal glutamine amidohydrolase (202 aa).

Catalysis depends on residues cysteine 27, histidine 80, and aspartate 96.

It belongs to the NTAQ1 family. In terms of assembly, monomer.

The protein localises to the cytoplasm. Its subcellular location is the cytosol. It localises to the nucleus. The catalysed reaction is N-terminal L-glutaminyl-[protein] + H2O = N-terminal L-glutamyl-[protein] + NH4(+). Functionally, mediates the side-chain deamidation of N-terminal glutamine residues to glutamate, an important step in N-end rule pathway of protein degradation. Conversion of the resulting N-terminal glutamine to glutamate renders the protein susceptible to arginylation, polyubiquitination and degradation as specified by the N-end rule. Does not act on substrates with internal or C-terminal glutamine and does not act on non-glutamine residues in any position. Does not deaminate acetylated N-terminal glutamine. With the exception of proline, all tested second-position residues on substrate peptides do not greatly influence the activity. In contrast, a proline at position 2, virtually abolishes deamidation of N-terminal glutamine. In Danio rerio (Zebrafish), this protein is Protein N-terminal glutamine amidohydrolase (ntaq1).